Here is a 683-residue protein sequence, read N- to C-terminus: 1,4-alpha-glucan-branching enzyme (683 aa).

Positions 92 and 127 each coordinate (1,4-alpha-D-glucosyl)n. Catalysis depends on D342, which acts as the Nucleophile. E397 serves as the catalytic Proton donor.

It belongs to the glycosyl hydrolase 13 family. GlgB subfamily.

The protein localises to the cytoplasm. It carries out the reaction Transfers a segment of a (1-&gt;4)-alpha-D-glucan chain to a primary hydroxy group in a similar glucan chain.. It functions in the pathway glycan biosynthesis; glycogen biosynthesis. Glycogen-branching enzyme participates in the glycogen biosynthetic process along with glycogenin and glycogen synthase. Generates alpha-1,6-glucosidic branches from alpha-1,4-linked glucose chains, to increase solubility of the glycogen polymer. The protein is 1,4-alpha-glucan-branching enzyme (GLC3) of Rhizophagus irregularis (strain DAOM 181602 / DAOM 197198 / MUCL 43194) (Arbuscular mycorrhizal fungus).